We begin with the raw amino-acid sequence, 93 residues long: Phosphoribosyl-ATP pyrophosphatase (93 aa).

It belongs to the PRA-PH family.

The protein localises to the cytoplasm. The enzyme catalyses 1-(5-phospho-beta-D-ribosyl)-ATP + H2O = 1-(5-phospho-beta-D-ribosyl)-5'-AMP + diphosphate + H(+). It participates in amino-acid biosynthesis; L-histidine biosynthesis; L-histidine from 5-phospho-alpha-D-ribose 1-diphosphate: step 2/9. This is Phosphoribosyl-ATP pyrophosphatase from Metallosphaera sedula (strain ATCC 51363 / DSM 5348 / JCM 9185 / NBRC 15509 / TH2).